We begin with the raw amino-acid sequence, 113 residues long: SLYAPSAVVLSIGKGDASGPVTVLRATTLSCAPVPGGTHPAPEAACAELKAGFAGGGFGGLLASPDPDRACPQHFDPVTVTLDGVWEGARTSWQHTFSNACVMGTTLDGGEAF.

2 disulfide bridges follow: Cys-31–Cys-46 and Cys-71–Cys-101.

It belongs to the protease inhibitor I16 (SSI) family. In terms of assembly, homodimer.

It is found in the secreted. Functionally, inhibitor of subtilisin BPN'. This Streptomyces bikiniensis protein is Subtilisin inhibitor-like protein 15.